Reading from the N-terminus, the 349-residue chain is Methylglutaconyl-CoA hydratase 1, mitochondrial (349 aa).

A mitochondrion-targeting transit peptide spans 1-37 (MPPVSRILSYAPRVAIRPSSQLARPARAFAVGTVRYY).

It belongs to the enoyl-CoA hydratase/isomerase family. As to quaternary structure, homohexamer.

The protein resides in the mitochondrion. It carries out the reaction (3S)-3-hydroxy-3-methylglutaryl-CoA = 3-methyl-(2E)-glutaconyl-CoA + H2O. It functions in the pathway amino-acid degradation; L-leucine degradation; (S)-3-hydroxy-3-methylglutaryl-CoA from 3-isovaleryl-CoA: step 3/3. Functionally, 3-methylglutaconyl-CoA hydratase that catalyzes the fifth step in the leucine degradation pathway, the reversible hydration of 3-methylglutaconyl-CoA (3-MG-CoA) to 3-hydroxy-3-methylglutaryl-CoA (HMG-CoA). Involved in vegetative growth, conidiation and in the stress response. Controls mitochondrial morphology and mitophagy, which are critical for the infectious growth of the pathogen. This is Methylglutaconyl-CoA hydratase 1, mitochondrial from Pyricularia oryzae (strain 70-15 / ATCC MYA-4617 / FGSC 8958) (Rice blast fungus).